The sequence spans 349 residues: Sphingolipid C4-hydroxylase SUR2 (349 aa).

A run of 5 helical transmembrane segments spans residues 9–29, 50–70, 99–119, 148–168, and 209–229; these read AAGS…MHYA, VLAL…FHVI, FLEV…FMHF, IYYG…FLFV, and PVEG…LTHL. In terms of domain architecture, Fatty acid hydroxylase spans 162–297; it reads FAGFLFVDTW…FTFWDNLFQT (136 aa).

The protein belongs to the sterol desaturase family.

It localises to the endoplasmic reticulum membrane. The catalysed reaction is sphinganine + 2 Fe(II)-[cytochrome b5] + O2 + 2 H(+) = (4R)-hydroxysphinganine + 2 Fe(III)-[cytochrome b5] + H2O. It carries out the reaction an N-acylsphinganine + 2 Fe(II)-[cytochrome b5] + O2 + 2 H(+) = an N-acyl-(4R)-4-hydroxysphinganine + 2 Fe(III)-[cytochrome b5] + H2O. It catalyses the reaction an N-acyleicosasphinganine + 2 Fe(II)-[cytochrome b5] + O2 + 2 H(+) = N-acyl-4-hydroxyeicosasphinganine + 2 Fe(III)-[cytochrome b5] + H2O. Its pathway is membrane lipid metabolism; sphingolipid biosynthesis. Its function is as follows. Required for hydroxylation of C-4 in the sphingoid moiety of ceramide. Catalyzes the conversion of sphinganine to phytosphingosine in sphingolipid biosynthesis. Involved in the response to syringomycin. In Saccharomyces cerevisiae (strain ATCC 204508 / S288c) (Baker's yeast), this protein is Sphingolipid C4-hydroxylase SUR2 (SUR2).